The sequence spans 504 residues: ATP-dependent RNA helicase DBP3 (504 aa).

Residues Met1–Glu14 show a composition bias toward basic and acidic residues. Residues Met1–Ser65 form a disordered region. A compositionally biased stretch (basic residues) spans Ser20–Lys53. The Q motif motif lies at Leu94 to Ala120. Residues Trp123–Val296 enclose the Helicase ATP-binding domain. Ala136–Thr143 provides a ligand contact to ATP. Residues Asp243–Asp246 carry the DEAD box motif. Residues Lys325 to Gly474 enclose the Helicase C-terminal domain.

This sequence belongs to the DEAD box helicase family. DDX5/DBP2 subfamily.

It is found in the nucleus. It localises to the nucleolus. It carries out the reaction ATP + H2O = ADP + phosphate + H(+). Its function is as follows. ATP-dependent RNA helicase required for 60S ribosomal subunit synthesis. Involved in efficient pre-rRNA processing, predominantly at site A3, which is necessary for the normal formation of 25S and 5.8S rRNAs. The polypeptide is ATP-dependent RNA helicase DBP3 (DBP3) (Kluyveromyces lactis (strain ATCC 8585 / CBS 2359 / DSM 70799 / NBRC 1267 / NRRL Y-1140 / WM37) (Yeast)).